Consider the following 1031-residue polypeptide: Error-prone DNA polymerase (1031 aa).

It belongs to the DNA polymerase type-C family. DnaE2 subfamily.

The protein localises to the cytoplasm. It catalyses the reaction DNA(n) + a 2'-deoxyribonucleoside 5'-triphosphate = DNA(n+1) + diphosphate. Its function is as follows. DNA polymerase involved in damage-induced mutagenesis and translesion synthesis (TLS). It is not the major replicative DNA polymerase. The polypeptide is Error-prone DNA polymerase (Pseudomonas syringae pv. tomato (strain ATCC BAA-871 / DC3000)).